The primary structure comprises 562 residues: MENQRIFLFLALSILGLLLWTSWERDTRAPVATEEVVEAEDDVPAPAETPDEAPDPADGETPARDRAEVEDERRVRVVTDLMDLEISTRGGDIRRVDLLQHGTTATDDTPFRLMADDRDPLFIAQTGLIDDSDNRPDHRALFRAERDEYRLSEGEDEIQVRLTWADENRGIEVARVYTVQRDSYVIDVRHQVRNAGDEEWRGYSYFQLRRNPDPPGTTPWYIYTFTGGSIYSPDDRFEKISFDDMDDTSLSRDIRDGWAAMIQHYFLGAWIPPESQALRYYTRAQAGNEYVLGMSSGRQTVQPGGEAEFVNRLFVGPKEQDRLRELHDSMTLSVDYGFLTVLAKPLFWLLDNIQDIVGNWGVAIILVTLLIKLAFYKLSATSYRSMAKMRRVQPRMQQLKERHGDDKQALNQAMMELYKKEKINPLGGCLPILVQIPVFIALYWVLLESVELRHAPFMLWIQDLSSRDPYFVLPLLMGATMFLQQRLNPAPLDPIQQRIMMALPIVFTGFFMLFPAGLVLYWLVNNGLSIAQQWYIMRNLEAIEAGKAAKSGKADKDQKKKD.

A helical transmembrane segment spans residues 4 to 24; it reads QRIFLFLALSILGLLLWTSWE. The disordered stretch occupies residues 33 to 71; that stretch reads TEEVVEAEDDVPAPAETPDEAPDPADGETPARDRAEVED. The segment covering 35–58 has biased composition (acidic residues); it reads EVVEAEDDVPAPAETPDEAPDPAD. The span at 61 to 71 shows a compositional bias: basic and acidic residues; the sequence is TPARDRAEVED. The next 4 membrane-spanning stretches (helical) occupy residues 330-350, 356-376, 426-446, and 499-519; these read MTLS…FWLL, IVGN…LAFY, LGGC…YWVL, and IMMA…AGLV.

This sequence belongs to the OXA1/ALB3/YidC family. Type 1 subfamily. Interacts with the Sec translocase complex via SecD. Specifically interacts with transmembrane segments of nascent integral membrane proteins during membrane integration.

The protein localises to the cell inner membrane. Functionally, required for the insertion and/or proper folding and/or complex formation of integral membrane proteins into the membrane. Involved in integration of membrane proteins that insert both dependently and independently of the Sec translocase complex, as well as at least some lipoproteins. Aids folding of multispanning membrane proteins. The chain is Membrane protein insertase YidC from Alkalilimnicola ehrlichii (strain ATCC BAA-1101 / DSM 17681 / MLHE-1).